Reading from the N-terminus, the 142-residue chain is Large ribosomal subunit protein uL11 (142 aa).

It belongs to the universal ribosomal protein uL11 family. Part of the ribosomal stalk of the 50S ribosomal subunit. Interacts with L10 and the large rRNA to form the base of the stalk. L10 forms an elongated spine to which L12 dimers bind in a sequential fashion forming a multimeric L10(L12)X complex. One or more lysine residues are methylated.

Its function is as follows. Forms part of the ribosomal stalk which helps the ribosome interact with GTP-bound translation factors. In Liberibacter asiaticus (Citrus greening disease), this protein is Large ribosomal subunit protein uL11.